The chain runs to 579 residues: Protein alan shepard (579 aa).

The segment covering 1 to 12 has biased composition (pro residues); it reads MHPRYSPAPPPQ. Positions 1 to 66 are disordered; that stretch reads MHPRYSPAPP…GSSSSAAAAP (66 aa). Residue tyrosine 5 is modified to Phosphotyrosine. The span at 13 to 24 shows a compositional bias: low complexity; sequence QQQQMGGPPHQQ. Gly residues predominate over residues 25–35; sequence QGGGGGGGGSM. Residues 37–54 are compositionally biased toward polar residues; sequence GPSNAQQLPPQIPRSQNY. Residues 55 to 66 are compositionally biased toward low complexity; it reads SNGSSSSAAAAP. Phosphotyrosine is present on residues tyrosine 125 and tyrosine 142. A disordered region spans residues 164–225; sequence PATTTYGQRV…TVQNQNQQGG (62 aa). Positions 178–225 are enriched in low complexity; sequence SPSNTNSSSSSNTGSQSGTLSTSLSNTTNTNTNMGPNGTVQNQNQQGG. RRM domains are found at residues 231–304 and 310–389; these read TNLY…MAKQ and TNLY…FADG. Residues 553 to 579 form a disordered region; that stretch reads MTDSEQASTAASPDEAYTQYPHQAAPK.

Its function is as follows. Has a role in the perception of gravity. The protein is Protein alan shepard of Drosophila sechellia (Fruit fly).